The sequence spans 161 residues: Alpha-crystallin A chain (161 aa).

Met-1 is modified (N-acetylmethionine). A required for complex formation with BFSP1 and BFSP2 region spans residues 1–53; sequence MDVTIQHPWFKRALGPFYHNRLFDQFFGEGLFEYDLLPFQSLFRTVLDSGISE. A deamidated glutamine; partial mark is found at Gln-6 and Gln-40. The sHSP domain maps to 41 to 150; that stretch reads SLFRTVLDSG…SHSERAIPVS (110 aa). Lys-87 carries the post-translational modification N6-acetyllysine. Position 88 (His-88) interacts with Zn(2+). Asn-89 bears the Deamidated asparagine; partial mark. Residues Glu-90 and His-95 each contribute to the Zn(2+) site. Ser-110 carries the phosphoserine modification. Position 111 is a deamidated asparagine; partial (Asn-111). Cysteines 119 and 130 form a disulfide. Gln-135 bears the Deamidated glutamine; partial mark. The tract at residues 135–161 is disordered; it reads QSGMDASHSERAIPVSREEKASSAPNS. Residues 141 to 155 are compositionally biased toward basic and acidic residues; it reads SHSERAIPVSREEKA. His-142 lines the Zn(2+) pocket. O-linked (GlcNAc) serine glycosylation occurs at Ser-150.

Belongs to the small heat shock protein (HSP20) family. Heteromer composed of three CRYAA and one CRYAB subunits. Inter-subunit bridging via zinc ions enhances stability, which is crucial as there is no protein turn over in the lens. Can also form homodimers and homotetramers (dimers of dimers) which serve as the building blocks of homooligomers. Within homooligomers, the zinc-binding motif is created from residues of 3 different molecules. His-88 and Glu-90 from one molecule are ligands of the zinc ion, and His-95 and His-142 residues from additional molecules complete the site with tetrahedral coordination geometry. Part of a complex required for lens intermediate filament formation composed of BFSP1, BFSP2 and CRYAA. Post-translationally, undergoes age-dependent proteolytical cleavage at the C-terminus.

It localises to the cytoplasm. It is found in the nucleus. Contributes to the transparency and refractive index of the lens. In its oxidized form (absence of intramolecular disulfide bond), acts as a chaperone, preventing aggregation of various proteins under a wide range of stress conditions. Required for the correct formation of lens intermediate filaments as part of a complex composed of BFSP1, BFSP2 and CRYAA. This chain is Alpha-crystallin A chain (CRYAA), found in Trichechus inunguis (Amazon manatee).